The chain runs to 336 residues: Fructose-1,6-bisphosphatase class 1 (336 aa).

Residues E92, D115, L117, and D118 each coordinate Mg(2+). Substrate is bound by residues 118–121 (DGSS), N211, Y244, 262–264 (YLY), and K274. A Mg(2+)-binding site is contributed by E280.

The protein belongs to the FBPase class 1 family. In terms of assembly, homotetramer. The cofactor is Mg(2+).

Its subcellular location is the cytoplasm. It carries out the reaction beta-D-fructose 1,6-bisphosphate + H2O = beta-D-fructose 6-phosphate + phosphate. It functions in the pathway carbohydrate biosynthesis; gluconeogenesis. The polypeptide is Fructose-1,6-bisphosphatase class 1 (Hahella chejuensis (strain KCTC 2396)).